Here is a 216-residue protein sequence, read N- to C-terminus: Somatotropin (216 aa).

The signal sequence occupies residues 1–26; sequence MAAGPRTSVLLAFTLLCLPWPQEAGA. His-45 contacts Zn(2+). A disulfide bridge links Cys-78 with Cys-189. At Ser-131 the chain carries Phosphoserine. Glu-198 lines the Zn(2+) pocket. An intrachain disulfide couples Cys-206 to Cys-214.

The protein belongs to the somatotropin/prolactin family.

Its subcellular location is the secreted. Its function is as follows. Plays an important role in growth control. Its major role in stimulating body growth is to stimulate the liver and other tissues to secrete IGF1. It stimulates both the differentiation and proliferation of myoblasts. It also stimulates amino acid uptake and protein synthesis in muscle and other tissues. The sequence is that of Somatotropin (GH1) from Camelus dromedarius (Dromedary).